The primary structure comprises 149 residues: Large ribosomal subunit protein bL9 (149 aa).

The protein belongs to the bacterial ribosomal protein bL9 family.

Functionally, binds to the 23S rRNA. In Proteus mirabilis (strain HI4320), this protein is Large ribosomal subunit protein bL9.